Reading from the N-terminus, the 239-residue chain is Large ribosomal subunit protein bL25 (239 aa).

The segment at 211–239 (KGKKDKEDEEAEKGTSVASPTTATGGTKK) is disordered. Over residues 226–239 (SVASPTTATGGTKK) the composition is skewed to polar residues.

This sequence belongs to the bacterial ribosomal protein bL25 family. CTC subfamily. As to quaternary structure, part of the 50S ribosomal subunit; part of the 5S rRNA/L5/L18/L25 subcomplex. Contacts the 5S rRNA. Binds to the 5S rRNA independently of L5 and L18.

This is one of the proteins that binds to the 5S RNA in the ribosome where it forms part of the central protuberance. This chain is Large ribosomal subunit protein bL25, found in Endomicrobium trichonymphae.